Here is a 448-residue protein sequence, read N- to C-terminus: Beta-glucosidase A (448 aa).

The Proton donor role is filled by glutamate 166. The Nucleophile role is filled by glutamate 355.

Belongs to the glycosyl hydrolase 1 family.

It catalyses the reaction Hydrolysis of terminal, non-reducing beta-D-glucosyl residues with release of beta-D-glucose.. Its pathway is glycan metabolism; cellulose degradation. This chain is Beta-glucosidase A (bglA), found in Acetivibrio thermocellus (strain ATCC 27405 / DSM 1237 / JCM 9322 / NBRC 103400 / NCIMB 10682 / NRRL B-4536 / VPI 7372) (Clostridium thermocellum).